Here is an 888-residue protein sequence, read N- to C-terminus: Leucine--tRNA ligase (888 aa).

Residues 43-53 (PYPSGRIHMGH) carry the 'HIGH' region motif. A 'KMSKS' region motif is present at residues 644–648 (KMSKS). Lys647 serves as a coordination point for ATP.

This sequence belongs to the class-I aminoacyl-tRNA synthetase family.

The protein resides in the cytoplasm. It carries out the reaction tRNA(Leu) + L-leucine + ATP = L-leucyl-tRNA(Leu) + AMP + diphosphate. The polypeptide is Leucine--tRNA ligase (Rhodopseudomonas palustris (strain BisA53)).